Reading from the N-terminus, the 391-residue chain is Chorismate synthase (391 aa).

R48 is an NADP(+) binding site. FMN is bound by residues 126–128 (RSS), G287, 302–306 (KPTSS), and R329.

Belongs to the chorismate synthase family. FMNH2 is required as a cofactor.

The catalysed reaction is 5-O-(1-carboxyvinyl)-3-phosphoshikimate = chorismate + phosphate. It participates in metabolic intermediate biosynthesis; chorismate biosynthesis; chorismate from D-erythrose 4-phosphate and phosphoenolpyruvate: step 7/7. Functionally, catalyzes the anti-1,4-elimination of the C-3 phosphate and the C-6 proR hydrogen from 5-enolpyruvylshikimate-3-phosphate (EPSP) to yield chorismate, which is the branch point compound that serves as the starting substrate for the three terminal pathways of aromatic amino acid biosynthesis. This reaction introduces a second double bond into the aromatic ring system. This chain is Chorismate synthase, found in Sulfolobus acidocaldarius (strain ATCC 33909 / DSM 639 / JCM 8929 / NBRC 15157 / NCIMB 11770).